A 240-amino-acid chain; its full sequence is Pyridoxine 5'-phosphate synthase (240 aa).

Asparagine 7 provides a ligand contact to 3-amino-2-oxopropyl phosphate. 9-10 (DH) contributes to the 1-deoxy-D-xylulose 5-phosphate binding site. Position 18 (arginine 18) interacts with 3-amino-2-oxopropyl phosphate. Histidine 43 functions as the Proton acceptor in the catalytic mechanism. Residues arginine 45 and histidine 50 each contribute to the 1-deoxy-D-xylulose 5-phosphate site. Residue glutamate 70 is the Proton acceptor of the active site. Residue threonine 100 coordinates 1-deoxy-D-xylulose 5-phosphate. Histidine 191 functions as the Proton donor in the catalytic mechanism. 3-amino-2-oxopropyl phosphate-binding positions include glycine 192 and 213-214 (GH).

Belongs to the PNP synthase family. As to quaternary structure, homooctamer; tetramer of dimers.

The protein localises to the cytoplasm. The enzyme catalyses 3-amino-2-oxopropyl phosphate + 1-deoxy-D-xylulose 5-phosphate = pyridoxine 5'-phosphate + phosphate + 2 H2O + H(+). It functions in the pathway cofactor biosynthesis; pyridoxine 5'-phosphate biosynthesis; pyridoxine 5'-phosphate from D-erythrose 4-phosphate: step 5/5. Functionally, catalyzes the complicated ring closure reaction between the two acyclic compounds 1-deoxy-D-xylulose-5-phosphate (DXP) and 3-amino-2-oxopropyl phosphate (1-amino-acetone-3-phosphate or AAP) to form pyridoxine 5'-phosphate (PNP) and inorganic phosphate. This Coxiella burnetii (strain Dugway 5J108-111) protein is Pyridoxine 5'-phosphate synthase.